We begin with the raw amino-acid sequence, 165 residues long: Putative pre-16S rRNA nuclease (165 aa).

The protein belongs to the YqgF nuclease family.

The protein localises to the cytoplasm. Could be a nuclease involved in processing of the 5'-end of pre-16S rRNA. In Rhizobium meliloti (strain 1021) (Ensifer meliloti), this protein is Putative pre-16S rRNA nuclease.